A 40-amino-acid chain; its full sequence is Probable non-specific lipid-transfer protein (40 aa).

The protein belongs to the plant LTP family. In terms of processing, phosphorylated by Ca(2+)-dependent protein kinase.

Functionally, plant non-specific lipid-transfer proteins transfer phospholipids as well as galactolipids across membranes. May play a role in wax or cutin deposition in the cell walls of expanding epidermal cells and certain secretory tissues. The sequence is that of Probable non-specific lipid-transfer protein from Triticum aestivum (Wheat).